Here is a 140-residue protein sequence, read N- to C-terminus: Pro-Viral epidermal growth factor (140 aa).

Positions 1–18 (MSMKYLMLLFAAMIIRSF) are cleaved as a signal peptide. At 19–100 (ADSGNAIETT…SENPNTTTSY (82 aa)) the chain is on the extracellular side. A glycan (N-linked (GlcNAc...) asparagine; by host) is linked at asparagine 34. The region spanning 41 to 81 (AIRLCGPEGDGYCLHGDCIHARDIDGMYCRCSHGYTGIRCQ) is the EGF-like domain. 3 disulfides stabilise this stretch: cysteine 45–cysteine 58, cysteine 53–cysteine 69, and cysteine 71–cysteine 80. Asparagine 95 is a glycosylation site (N-linked (GlcNAc...) asparagine; by host). A helical membrane pass occupies residues 101 to 121 (IPSPGIMLVLVGIIIITCCLL). At 122–140 (SVYRFTRRTKLPIQDMVVP) the chain is on the cytoplasmic side.

The protein belongs to the orthopoxvirus OPG019 family. In terms of assembly, viral epidermal growth factor interacts with host EGFR and promotes EGFR dimerization. In terms of processing, cleaved at the cell surface by host ADAM10, thereby releasing the secreted form of VGF.

The protein localises to the host membrane. It localises to the secreted. Stimulates cellular proliferation (hyperplasia)and mobility around infected cells to promote rapid and efficient spread of infection. This effect is beneficial for virus replication in vivo, because poxviruses replicate possibly better in proliferating cells than in quiescent cells. Acts by binding host EGFR, inducing its dimerization, autophosphorylation and leading to activation of several cellular pathways regulating cell proliferation or cell survival. The activation by host EGFR of mitogen activated protein kinases (MAPK) and extracellular-signal regulated kinases (ERK) are essential for the positive effect of vaccinia growth factor on poxvirus virulence in vivo. In Bos taurus (Bovine), this protein is Pro-Viral epidermal growth factor (OPG019).